Reading from the N-terminus, the 165-residue chain is UPF0262 protein blr1257 (165 aa).

Belongs to the UPF0262 family.

This is UPF0262 protein blr1257 from Bradyrhizobium diazoefficiens (strain JCM 10833 / BCRC 13528 / IAM 13628 / NBRC 14792 / USDA 110).